The following is a 500-amino-acid chain: MASVAQESAGSQRRLPPRHGALRGLLLLCLWLPSGRAALPPAAPLSELHAQLSGVEQLLEEFRRQLQQERPQEELELELRAGGGPQEDCPGPGSGGYSAMPDAIIRTKDSLAAGASFLRAPAAVRGWRQCVAACCSEPRCSVAVVELPRRPAPPAAVLGCYLFNCTARGRNVCKFALHSGYSSYSLSRAPDGAALATARASPRQEKDAPPLSKAGQDVVLHLPTDGVVLDGRESTDDHAIVQYEWALLQGDPSVDMKVPQSGTLKLSHLQEGTYTFQLTVTDTAGQRSSDNVSVTVLRAAYSTGGCLHTCSRYHFFCDDGCCIDITLACDGVQQCPDGSDEDFCQNLGLDRKMVTHTAASPALPRTTGPSEDAGGDSLVEKSQKATAPNKPPALSNTEKRNHSAFWGPESQIIPVMPDSSSSGKNRKEESYIFESKGDGGGGEHPAPETGAVLPLALGLAITALLLLMVACRLRLVKQKLKKARPITSEESDYLINGMYL.

An N-terminal signal peptide occupies residues 1 to 37 (MASVAQESAGSQRRLPPRHGALRGLLLLCLWLPSGRA). The Extracellular segment spans residues 38 to 450 (ALPPAAPLSE…GGEHPAPETG (413 aa)). The MANSC domain occupies 99-184 (AMPDAIIRTK…FALHSGYSSY (86 aa)). 2 N-linked (GlcNAc...) asparagine glycosylation sites follow: asparagine 164 and asparagine 291. A PKD domain is found at 210–305 (PLSKAGQDVV…VLRAAYSTGG (96 aa)). In terms of domain architecture, LDL-receptor class A spans 309 to 345 (TCSRYHFFCDDGCCIDITLACDGVQQCPDGSDEDFCQ). 3 disulfides stabilise this stretch: cysteine 310–cysteine 322, cysteine 317–cysteine 335, and cysteine 329–cysteine 344. A disordered region spans residues 358–445 (AASPALPRTT…KGDGGGGEHP (88 aa)). Asparagine 401 carries N-linked (GlcNAc...) asparagine glycosylation. A helical transmembrane segment spans residues 451 to 473 (AVLPLALGLAITALLLLMVACRL). Over 474–500 (RLVKQKLKKARPITSEESDYLINGMYL) the chain is Cytoplasmic. Serine 491 carries the post-translational modification Phosphoserine.

It belongs to the LDLR family.

It is found in the membrane. The protein is Low-density lipoprotein receptor-related protein 11 (LRP11) of Homo sapiens (Human).